A 283-amino-acid chain; its full sequence is Pantothenate synthetase (283 aa).

30 to 37 (MGNLHSGH) contributes to the ATP binding site. His-37 (proton donor) is an active-site residue. Gln-61 is a binding site for (R)-pantoate. Residue Gln-61 participates in beta-alanine binding. Position 149–152 (149–152 (GEKD)) interacts with ATP. Residue Gln-155 participates in (R)-pantoate binding. Residues Val-178 and 186-189 (LSSR) contribute to the ATP site.

The protein belongs to the pantothenate synthetase family. As to quaternary structure, homodimer.

The protein resides in the cytoplasm. The enzyme catalyses (R)-pantoate + beta-alanine + ATP = (R)-pantothenate + AMP + diphosphate + H(+). The protein operates within cofactor biosynthesis; (R)-pantothenate biosynthesis; (R)-pantothenate from (R)-pantoate and beta-alanine: step 1/1. In terms of biological role, catalyzes the condensation of pantoate with beta-alanine in an ATP-dependent reaction via a pantoyl-adenylate intermediate. The chain is Pantothenate synthetase from Pseudomonas savastanoi pv. phaseolicola (strain 1448A / Race 6) (Pseudomonas syringae pv. phaseolicola (strain 1448A / Race 6)).